The chain runs to 161 residues: MARQKKYSGKGGARKKNKQKQNVAPRRRVEFKYKGFTLEELQEMPIKKFMEIVPSRQRRTMARGITPKQRKLVMKIKKARRLTNRGKEARVIRTHCRDFVITPEMIGLTFGIYNGKEFKEIKLVEETVGRFLGEMAPTRAVVQHGSPGMGATRGSMFVPIK.

Over residues 1 to 19 the composition is skewed to basic residues; sequence MARQKKYSGKGGARKKNKQ. The tract at residues 1 to 26 is disordered; the sequence is MARQKKYSGKGGARKKNKQKQNVAPR.

The protein belongs to the universal ribosomal protein uS19 family.

Functionally, protein S19 forms a complex with S13 that binds strongly to the 16S ribosomal RNA. In Methanococcus maripaludis (strain C5 / ATCC BAA-1333), this protein is Small ribosomal subunit protein uS19.